The primary structure comprises 261 residues: Carbonic anhydrase 1 (261 aa).

The tract at residues 1-31 (MASPDWGYDDKNGPEQWSKLYPIANGNNQSP) is disordered. An N-acetylalanine modification is found at alanine 2. Residues 4-261 (PDWGYDDKNG…LKGRTVRASF (258 aa)) enclose the Alpha-carbonic anhydrase domain. The active-site Proton donor/acceptor is histidine 65. Histidine 65, histidine 68, histidine 95, histidine 97, and histidine 120 together coordinate Zn(2+). Residues threonine 200 and 200–201 (TH) contribute to the substrate site. Histidine 201 contacts Zn(2+). A disordered region spans residues 241–261 (PMQHNNRPTQPLKGRTVRASF).

This sequence belongs to the alpha-carbonic anhydrase family. Zn(2+) serves as cofactor.

Its subcellular location is the cytoplasm. It catalyses the reaction hydrogencarbonate + H(+) = CO2 + H2O. It carries out the reaction urea = cyanamide + H2O. Activated by histamine, imidazole, L-adrenaline, L- and D-histidine, and L- and D-phenylalanine. Inhibited by coumarins, sulfonamide derivatives such as acetazolamide, benzenesulfonamide and derivatives (4-carboxyethylbenzene-sulfonamide, 4-carboxyethylbenzene-sulfonamide ethyl ester, 4-(acetyl-2-aminoethyl)benzene-sulfonamide, 4-aminoethylbenzene-sulfonamide), and 'prong inhibitors' BR15, BR17, BR22 and BR30. Activated by a short exposition to Foscarnet (phosphonoformate trisodium salt), but inhibited by a long one. Esterase activity weakly reduced by cyanamide. Catalyzes the reversible hydration of carbon dioxide. Can hydrate cyanamide to urea. In Homo sapiens (Human), this protein is Carbonic anhydrase 1 (CA1).